A 222-amino-acid polypeptide reads, in one-letter code: N-(5'-phosphoribosyl)anthranilate isomerase (222 aa).

This sequence belongs to the TrpF family.

The catalysed reaction is N-(5-phospho-beta-D-ribosyl)anthranilate = 1-(2-carboxyphenylamino)-1-deoxy-D-ribulose 5-phosphate. Its pathway is amino-acid biosynthesis; L-tryptophan biosynthesis; L-tryptophan from chorismate: step 3/5. This is N-(5'-phosphoribosyl)anthranilate isomerase from Xanthomonas oryzae pv. oryzae (strain PXO99A).